Here is a 272-residue protein sequence, read N- to C-terminus: Undecaprenyl-diphosphatase (272 aa).

Helical transmembrane passes span 2 to 22 (FDIIKAVIIGIVEGLTEFLPI), 43 to 63 (FINMFEYVIQFGAILAVILLY), 82 to 102 (WQLWAKVIIAVLPSVVVGLPL), 110 to 130 (LHTPLVVATTLIIYGVLFIIL), 185 to 205 (YVATEFSFFLAIPTMVGVSIL), 224 to 244 (VLMTGSIVSFLVAIVAIKWLL), and 252 to 272 (FKPFGWYRIALGAIVLLVMFI).

It belongs to the UppP family.

It is found in the cell membrane. The enzyme catalyses di-trans,octa-cis-undecaprenyl diphosphate + H2O = di-trans,octa-cis-undecaprenyl phosphate + phosphate + H(+). Catalyzes the dephosphorylation of undecaprenyl diphosphate (UPP). Confers resistance to bacitracin. This chain is Undecaprenyl-diphosphatase, found in Lacticaseibacillus paracasei (strain ATCC 334 / BCRC 17002 / CCUG 31169 / CIP 107868 / KCTC 3260 / NRRL B-441) (Lactobacillus paracasei).